The chain runs to 551 residues: Probable aldehyde dehydrogenase (551 aa).

278 to 283 (GSSRVA) serves as a coordination point for NAD(+). Glutamate 297 acts as the Proton acceptor in catalysis. The active-site Nucleophile is the cysteine 332.

Belongs to the aldehyde dehydrogenase family. In uninfected plants, highest levels found in stems. In plants infected with the flax rust, highest levels in leaves. Higher levels of expression in infected leaves than uninfected stems.

The enzyme catalyses an aldehyde + NAD(+) + H2O = a carboxylate + NADH + 2 H(+). Could be involved in facilitating the biotrophic relationship between the plant and the rust fungus. This Linum usitatissimum (Flax) protein is Probable aldehyde dehydrogenase (FIS1).